The following is a 214-amino-acid chain: Probable septum site-determining protein MinC (214 aa).

The protein belongs to the MinC family. In terms of assembly, interacts with MinD and FtsZ.

In terms of biological role, cell division inhibitor that blocks the formation of polar Z ring septums. Rapidly oscillates between the poles of the cell to destabilize FtsZ filaments that have formed before they mature into polar Z rings. Prevents FtsZ polymerization. This Thermoanaerobacter pseudethanolicus (strain ATCC 33223 / 39E) (Clostridium thermohydrosulfuricum) protein is Probable septum site-determining protein MinC.